Here is a 109-residue protein sequence, read N- to C-terminus: Nucleoid-associated protein BU482 (109 aa).

This sequence belongs to the YbaB/EbfC family. In terms of assembly, homodimer.

The protein localises to the cytoplasm. Its subcellular location is the nucleoid. Functionally, binds to DNA and alters its conformation. May be involved in regulation of gene expression, nucleoid organization and DNA protection. This chain is Nucleoid-associated protein BU482, found in Buchnera aphidicola subsp. Acyrthosiphon pisum (strain APS) (Acyrthosiphon pisum symbiotic bacterium).